A 386-amino-acid chain; its full sequence is 3-hydroxyisobutyryl-CoA hydrolase, mitochondrial (386 aa).

The transit peptide at 1–32 directs the protein to the mitochondrion; sequence MGQREMWRLMSRFNAFKRTNTILHHLRMSKHT. Lys-55 and Lys-92 each carry N6-acetyllysine; alternate. N6-succinyllysine; alternate occurs at positions 55 and 92. Positions 121, 146, 169, and 177 each coordinate substrate. N6-acetyllysine; alternate is present on Lys-221. Lys-221 carries the N6-succinyllysine; alternate modification. Ser-234 is modified (phosphoserine). Lys-257 carries the post-translational modification N6-succinyllysine. The residue at position 297 (Lys-297) is an N6-acetyllysine; alternate. Position 297 is an N6-succinyllysine; alternate (Lys-297). At Lys-301 the chain carries N6-succinyllysine. The residue at position 353 (Lys-353) is an N6-acetyllysine; alternate. Lys-353 bears the N6-succinyllysine; alternate mark. Residue Ser-356 is modified to Phosphoserine. Residues Lys-360 and Lys-365 each carry the N6-acetyllysine modification. The residue at position 377 (Lys-377) is an N6-succinyllysine.

Belongs to the enoyl-CoA hydratase/isomerase family. In terms of tissue distribution, highly expressed in liver and kidney, also detected in heart, muscle and brain (at protein level). Not detected in lung.

Its subcellular location is the mitochondrion. The enzyme catalyses 3-hydroxy-2-methylpropanoyl-CoA + H2O = 3-hydroxy-2-methylpropanoate + CoA + H(+). The protein operates within amino-acid degradation; L-valine degradation. Its function is as follows. Hydrolyzes 3-hydroxyisobutyryl-CoA (HIBYL-CoA), a saline catabolite. Has high activity toward isobutyryl-CoA. Could be an isobutyryl-CoA dehydrogenase that functions in valine catabolism. Also hydrolyzes 3-hydroxypropanoyl-CoA. The sequence is that of 3-hydroxyisobutyryl-CoA hydrolase, mitochondrial (HIBCH) from Homo sapiens (Human).